Here is a 127-residue protein sequence, read N- to C-terminus: Large ribosomal subunit protein bL17 (127 aa).

This sequence belongs to the bacterial ribosomal protein bL17 family. As to quaternary structure, part of the 50S ribosomal subunit. Contacts protein L32.

The polypeptide is Large ribosomal subunit protein bL17 (Salmonella paratyphi A (strain AKU_12601)).